The following is a 159-amino-acid chain: Phosphopantetheine adenylyltransferase (159 aa).

His16 is a binding site for ATP. The substrate site is built by Lys40, Met72, and Arg86. Residues 87 to 89 (GLR), Glu97, and 122 to 128 (YQYLSAS) each bind ATP.

It belongs to the bacterial CoaD family. In terms of assembly, homohexamer. The cofactor is Mg(2+).

Its subcellular location is the cytoplasm. The catalysed reaction is (R)-4'-phosphopantetheine + ATP + H(+) = 3'-dephospho-CoA + diphosphate. Its pathway is cofactor biosynthesis; coenzyme A biosynthesis; CoA from (R)-pantothenate: step 4/5. Functionally, reversibly transfers an adenylyl group from ATP to 4'-phosphopantetheine, yielding dephospho-CoA (dPCoA) and pyrophosphate. The chain is Phosphopantetheine adenylyltransferase from Dehalococcoides mccartyi (strain ATCC BAA-2100 / JCM 16839 / KCTC 5957 / BAV1).